A 48-amino-acid chain; its full sequence is ATP synthase protein 8 (48 aa).

N-formylmethionine is present on M1. The Mitochondrial intermembrane segment spans residues 1–12; it reads MPQLVPFYFTNQ. A helical transmembrane segment spans residues 13 to 32; the sequence is IFYGFASLSVIVYLFSIYIL. Over 33-48 the chain is Mitochondrial matrix; the sequence is PHYLEIYVTRIFITKT.

In terms of assembly, F-type ATP synthases have 2 components, the catalytic core F(1) and the membrane-embedded component F(0), linked together by a central stalk and a peripheral stalk. The central stalk, also called rotor shaft, is often seen as part of F(1). The peripheral stalk is seen as part of F(0). F(0) contains the membrane channel next to the rotor. F-type ATP synthases form dimers but each monomer functions independently in ATP generation. The dimer consists of 17 different polypeptides: ATP1 (subunit alpha, 3 molecules per monomer, part of F(1)), ATP2 (subunit beta, 3 copies per monomer, part of F(1)), ATP3 (subunit gamma, part of the central stalk), ATP4 (subunit b, part of the peripheral stalk), ATP5/OSCP (subunit 5/OSCP, part of the peripheral stalk), ATP6 (subunit a, part of the peripheral stalk), ATP7 (subunit d, part of the peripheral stalk), ATP8 (subunit 8, part of the peripheral stalk), OLI1 (subunit c, part of the rotor, 10 molecules per monomer), ATP14 (subunit h, part of the peripheral stalk), ATP15 (subunit epsilon, part of the central stalk), ATP16 (subunit delta, part of the central stalk), ATP17 (subunit f, part of the peripheral stalk), ATP18 (subunit i/j, part of the peripheral stalk), ATP19 (subunit k, dimer-specific, at interface between monomers), ATP20 (subunit g, at interface between monomers), TIM11 (subunit e, at interface between monomers).

It localises to the mitochondrion inner membrane. Its function is as follows. Mitochondrial membrane ATP synthase (F(1)F(0) ATP synthase or Complex V) produces ATP from ADP in the presence of a proton gradient across the membrane which is generated by electron transport complexes of the respiratory chain. F-type ATP synthases consist of two structural domains, F(1) - containing the extramembraneous catalytic core, and F(0) - containing the membrane proton channel, linked together by a central stalk and a peripheral stalk. During catalysis, ATP synthesis in the catalytic domain of F(1) is coupled via a rotary mechanism of the central stalk subunits to proton translocation. Part of the complex F(0) domain. Minor subunit located with subunit a/ATP6 in the membrane. This Yarrowia lipolytica (strain CLIB 122 / E 150) (Yeast) protein is ATP synthase protein 8.